We begin with the raw amino-acid sequence, 364 residues long: DNA polymerase IV (364 aa).

Positions 14–198 (IIHIDMDAFF…LPIEKFHGVG (185 aa)) constitute a UmuC domain. The Mg(2+) site is built by Asp-18 and Asp-116. Glu-117 is an active-site residue.

Belongs to the DNA polymerase type-Y family. As to quaternary structure, monomer. Requires Mg(2+) as cofactor.

It is found in the cytoplasm. It carries out the reaction DNA(n) + a 2'-deoxyribonucleoside 5'-triphosphate = DNA(n+1) + diphosphate. In terms of biological role, poorly processive, error-prone DNA polymerase involved in untargeted mutagenesis. Copies undamaged DNA at stalled replication forks, which arise in vivo from mismatched or misaligned primer ends. These misaligned primers can be extended by PolIV. Exhibits no 3'-5' exonuclease (proofreading) activity. May be involved in translesional synthesis, in conjunction with the beta clamp from PolIII. The chain is DNA polymerase IV from Streptococcus pyogenes serotype M1.